Reading from the N-terminus, the 77-residue chain is Acyl carrier protein (77 aa).

Residues 2 to 77 (SNIEERVRNI…SAIDYVVNNG (76 aa)) form the Carrier domain. O-(pantetheine 4'-phosphoryl)serine is present on serine 37.

The protein belongs to the acyl carrier protein (ACP) family. In terms of processing, 4'-phosphopantetheine is transferred from CoA to a specific serine of apo-ACP by AcpS. This modification is essential for activity because fatty acids are bound in thioester linkage to the sulfhydryl of the prosthetic group.

The protein resides in the cytoplasm. It participates in lipid metabolism; fatty acid biosynthesis. Carrier of the growing fatty acid chain in fatty acid biosynthesis. This is Acyl carrier protein from Psychromonas ingrahamii (strain DSM 17664 / CCUG 51855 / 37).